We begin with the raw amino-acid sequence, 159 residues long: MQCPSCQNTDSRVLESRSADSGRSVRRRRECLNCDFRFTTYERVETTPINVLKRSGAKELFNRSKIINGLNRACEKTLIHGSKIEFIVDEIELELHQGVCKEIKSIEIGEMVLTHLKDINEVAYIRFASVYRQFNGINDFMKTLEALKPIKKEQLASVI.

The span at 1–11 (MQCPSCQNTDS) shows a compositional bias: polar residues. Residues 1 to 20 (MQCPSCQNTDSRVLESRSAD) are disordered. The segment at 3-34 (CPSCQNTDSRVLESRSADSGRSVRRRRECLNC) is a zinc-finger region. An ATP-cone domain is found at 49–139 (INVLKRSGAK…VYRQFNGIND (91 aa)).

The protein belongs to the NrdR family. Requires Zn(2+) as cofactor.

In terms of biological role, negatively regulates transcription of bacterial ribonucleotide reductase nrd genes and operons by binding to NrdR-boxes. The sequence is that of Transcriptional repressor NrdR from Prochlorococcus marinus (strain NATL1A).